The primary structure comprises 1012 residues: Probable inorganic carbon transporter subunit DabA (1012 aa).

Residues Cys-489, Asp-491, His-679, and Cys-694 each contribute to the Zn(2+) site.

It belongs to the inorganic carbon transporter (TC 9.A.2) DabA family. As to quaternary structure, forms a complex with DabB. It depends on Zn(2+) as a cofactor.

It is found in the cell inner membrane. Part of an energy-coupled inorganic carbon pump. The sequence is that of Probable inorganic carbon transporter subunit DabA from Dechloromonas aromatica (strain RCB).